The primary structure comprises 354 residues: Uroporphyrinogen decarboxylase (354 aa).

Substrate-binding positions include 27 to 31 (RQAGR), phenylalanine 46, aspartate 77, tyrosine 153, threonine 208, and histidine 326.

The protein belongs to the uroporphyrinogen decarboxylase family. Homodimer.

It is found in the cytoplasm. The catalysed reaction is uroporphyrinogen III + 4 H(+) = coproporphyrinogen III + 4 CO2. The protein operates within porphyrin-containing compound metabolism; protoporphyrin-IX biosynthesis; coproporphyrinogen-III from 5-aminolevulinate: step 4/4. Functionally, catalyzes the decarboxylation of four acetate groups of uroporphyrinogen-III to yield coproporphyrinogen-III. The protein is Uroporphyrinogen decarboxylase of Neisseria meningitidis serogroup B (strain ATCC BAA-335 / MC58).